The primary structure comprises 450 residues: Probable glucoamylase (450 aa).

The N-terminal stretch at 1–16 (MRTYWLFLLLGGVVSA) is a signal peptide. The propeptide occupies 17–28 (ESLLSPNKRSKE). Residue tryptophan 147 coordinates substrate. Residue aspartate 203 is the Proton acceptor of the active site. Glutamate 206 serves as the catalytic Proton donor. Asparagine 383 and asparagine 409 each carry an N-linked (GlcNAc...) asparagine glycan.

It belongs to the glycosyl hydrolase 15 family.

It carries out the reaction Hydrolysis of terminal (1-&gt;4)-linked alpha-D-glucose residues successively from non-reducing ends of the chains with release of beta-D-glucose.. The protein is Probable glucoamylase (meu17) of Schizosaccharomyces pombe (strain 972 / ATCC 24843) (Fission yeast).